We begin with the raw amino-acid sequence, 243 residues long: Protein Thf1 (243 aa).

Positions 180 to 224 (SKARVEKDLNLYKSNLEKMAQAVELTEQILESERRKREQNESAKL) form a coiled coil. The segment covering 210–220 (ESERRKREQNE) has biased composition (basic and acidic residues). The tract at residues 210 to 243 (ESERRKREQNESAKLNTGSSEQMSQGVEACSNIS) is disordered. Polar residues predominate over residues 221 to 243 (SAKLNTGSSEQMSQGVEACSNIS).

Belongs to the THF1 family.

May be involved in photosynthetic membrane biogenesis. The polypeptide is Protein Thf1 (Prochlorococcus marinus (strain MIT 9313)).